We begin with the raw amino-acid sequence, 396 residues long: Probable sugar efflux transporter (396 aa).

12 consecutive transmembrane segments (helical) span residues 15-35 (VVTLAIAAFIFNTTEFVPVGL), 50-70 (VGIMLTIYAWVVAVMSLPFML), 81-101 (LICLFVLFIASHVLSFLAWNF), 103-123 (VLVISRIGIAFAHAIFWSITA), 136-156 (AQALSLIATGTALAMVLGLPI), 169-189 (TFFAIGMGALITLLCLIKLLP), 202-222 (LPLLFRCPALMSLYVLTVVVV), 246-266 (FATVLLLLLGGAGIIGSLVFG), 275-295 (SLVSIAIALLVVCLLLLLPAA), 301-321 (LAILSIFWGIAIMVIGLGMQV), 333-353 (VAMALFSGIFNIGIGAGALVG), and 364-384 (AIGYIGAIPACAALVWAVLIF).

This sequence belongs to the major facilitator superfamily. SotB (TC 2.A.1.2) family.

It is found in the cell inner membrane. In terms of biological role, involved in the efflux of sugars. The physiological role may be the reduction of the intracellular concentration of toxic sugars or sugar metabolites. The protein is Probable sugar efflux transporter of Salmonella paratyphi A (strain ATCC 9150 / SARB42).